Consider the following 338-residue polypeptide: Aspartate carbamoyltransferase catalytic subunit (338 aa).

Arg59 and Thr60 together coordinate carbamoyl phosphate. Lys87 lines the L-aspartate pocket. Residues Arg109, His142, and Gln145 each contribute to the carbamoyl phosphate site. Positions 182 and 253 each coordinate L-aspartate. Positions 294 and 295 each coordinate carbamoyl phosphate.

The protein belongs to the aspartate/ornithine carbamoyltransferase superfamily. ATCase family. As to quaternary structure, heterododecamer (2C3:3R2) of six catalytic PyrB chains organized as two trimers (C3), and six regulatory PyrI chains organized as three dimers (R2).

The enzyme catalyses carbamoyl phosphate + L-aspartate = N-carbamoyl-L-aspartate + phosphate + H(+). The protein operates within pyrimidine metabolism; UMP biosynthesis via de novo pathway; (S)-dihydroorotate from bicarbonate: step 2/3. Catalyzes the condensation of carbamoyl phosphate and aspartate to form carbamoyl aspartate and inorganic phosphate, the committed step in the de novo pyrimidine nucleotide biosynthesis pathway. The sequence is that of Aspartate carbamoyltransferase catalytic subunit from Prochlorococcus marinus (strain MIT 9301).